The chain runs to 81 residues: Small ribosomal subunit protein bS16 (81 aa).

It belongs to the bacterial ribosomal protein bS16 family.

The sequence is that of Small ribosomal subunit protein bS16 from Caldicellulosiruptor saccharolyticus (strain ATCC 43494 / DSM 8903 / Tp8T 6331).